The chain runs to 151 residues: Guanylate kinase homolog (151 aa).

Positions 1-141 (MEREGVDYHY…AYSKLIQILQ (141 aa)) constitute a Guanylate kinase-like domain.

This sequence belongs to the guanylate kinase family.

The polypeptide is Guanylate kinase homolog (Vaccinia virus (strain Copenhagen) (VACV)).